The chain runs to 427 residues: Glutamate-1-semialdehyde 2,1-aminomutase (427 aa).

Lys-265 carries the post-translational modification N6-(pyridoxal phosphate)lysine.

This sequence belongs to the class-III pyridoxal-phosphate-dependent aminotransferase family. HemL subfamily. In terms of assembly, homodimer. It depends on pyridoxal 5'-phosphate as a cofactor.

It is found in the cytoplasm. It carries out the reaction (S)-4-amino-5-oxopentanoate = 5-aminolevulinate. Its pathway is porphyrin-containing compound metabolism; protoporphyrin-IX biosynthesis; 5-aminolevulinate from L-glutamyl-tRNA(Glu): step 2/2. The polypeptide is Glutamate-1-semialdehyde 2,1-aminomutase (Bordetella avium (strain 197N)).